The sequence spans 473 residues: Ribosomal RNA small subunit methyltransferase F (473 aa).

Residues 124–130 (ASAPGSK), E148, D175, and D193 each bind S-adenosyl-L-methionine. Catalysis depends on C246, which acts as the Nucleophile.

Belongs to the class I-like SAM-binding methyltransferase superfamily. RsmB/NOP family.

It localises to the cytoplasm. It carries out the reaction cytidine(1407) in 16S rRNA + S-adenosyl-L-methionine = 5-methylcytidine(1407) in 16S rRNA + S-adenosyl-L-homocysteine + H(+). In terms of biological role, specifically methylates the cytosine at position 1407 (m5C1407) of 16S rRNA. This is Ribosomal RNA small subunit methyltransferase F from Aliivibrio fischeri (strain ATCC 700601 / ES114) (Vibrio fischeri).